Reading from the N-terminus, the 204-residue chain is Recombination protein RecR (204 aa).

A C4-type zinc finger spans residues 63–78 (CNRCFNITVEDPCTIC). The region spanning 86-181 (RQVCVVEEPL…RVTRLARGLP (96 aa)) is the Toprim domain.

It belongs to the RecR family.

Functionally, may play a role in DNA repair. It seems to be involved in an RecBC-independent recombinational process of DNA repair. It may act with RecF and RecO. In Herpetosiphon aurantiacus (strain ATCC 23779 / DSM 785 / 114-95), this protein is Recombination protein RecR.